A 724-amino-acid polypeptide reads, in one-letter code: Ribosomal protein S6 kinase alpha-1 (724 aa).

Ser54 bears the Phosphoserine mark. The Protein kinase 1 domain maps to 62 to 310 (FELLKVLGQG…AEEIKRHIFY (249 aa)). ATP contacts are provided by residues 68-76 (LGQGSFGKV) and Lys94. The Proton acceptor role is filled by Asp187. At Ser221 the chain carries Phosphoserine; by PDPK1. Position 296 is a phosphoserine (Ser296). The AGC-kinase C-terminal domain maps to 311-380 (STIDWNKLYR…VATGLMEDDG (70 aa)). Phosphothreonine is present on Thr348. Phosphoserine is present on residues Ser352, Ser358, and Ser369. The Protein kinase 2 domain occupies 407-664 (YVVKETIGVG…AKQVLQHPWI (258 aa)). Residues 413 to 421 (IGVGSYSVC) and Lys436 each bind ATP. The active-site Proton acceptor is the Asp524. The residue at position 562 (Thr562) is a Phosphothreonine. Ser721 carries the post-translational modification Phosphoserine.

Belongs to the protein kinase superfamily. AGC Ser/Thr protein kinase family. S6 kinase subfamily. Forms a complex with either MAPK1/ERK2 or MAPK3/ERK1 in quiescent cells. Transiently dissociates following mitogenic stimulation. Interacts with ETV1/ER81 and FGFR1. Mg(2+) is required as a cofactor. In terms of processing, activated by phosphorylation at Ser-221 by PDPK1. Autophosphorylated on Ser-369, as part of the activation process. May be phosphorylated at Thr-348 and Ser-352 by MAPK1/ERK2 and MAPK3/ERK1. N-terminal myristoylation results in an activated kinase in the absence of added growth factors. As to expression, intestine, thymus, and lung.

Its subcellular location is the nucleus. The protein localises to the cytoplasm. It catalyses the reaction L-seryl-[protein] + ATP = O-phospho-L-seryl-[protein] + ADP + H(+). The enzyme catalyses L-threonyl-[protein] + ATP = O-phospho-L-threonyl-[protein] + ADP + H(+). Upon extracellular signal or mitogen stimulation, phosphorylated at Thr-562 in the C-terminal kinase domain (CTKD) by MAPK1/ERK2 and MAPK3/ERK1. The activated CTKD then autophosphorylates Ser-369, allowing binding of PDPK1, which in turn phosphorylates Ser-221 in the N-terminal kinase domain (NTDK) leading to the full activation of the protein and subsequent phosphorylation of the substrates by the NTKD. Its function is as follows. Serine/threonine-protein kinase that acts downstream of ERK (MAPK1/ERK2 and MAPK3/ERK1) signaling and mediates mitogenic and stress-induced activation of the transcription factors CREB1, ETV1/ER81 and NR4A1/NUR77, regulates translation through RPS6 and EIF4B phosphorylation, and mediates cellular proliferation, survival, and differentiation by modulating mTOR signaling and repressing pro-apoptotic function of BAD and DAPK1. In fibroblast, is required for EGF-stimulated phosphorylation of CREB1, which results in the subsequent transcriptional activation of several immediate-early genes. In response to mitogenic stimulation (EGF and PMA), phosphorylates and activates NR4A1/NUR77 and ETV1/ER81 transcription factors and the cofactor CREBBP. Upon insulin-derived signal, acts indirectly on the transcription regulation of several genes by phosphorylating GSK3B at 'Ser-9' and inhibiting its activity. Phosphorylates RPS6 in response to serum or EGF via an mTOR-independent mechanism and promotes translation initiation by facilitating assembly of the pre-initiation complex. In response to insulin, phosphorylates EIF4B, enhancing EIF4B affinity for the EIF3 complex and stimulating cap-dependent translation. Is involved in the mTOR nutrient-sensing pathway by directly phosphorylating TSC2 at 'Ser-1798', which potently inhibits TSC2 ability to suppress mTOR signaling, and mediates phosphorylation of RPTOR, which regulates mTORC1 activity and may promote rapamycin-sensitive signaling independently of the PI3K/AKT pathway. Also involved in feedback regulation of mTORC1 and mTORC2 by phosphorylating DEPTOR. Mediates cell survival by phosphorylating the pro-apoptotic proteins BAD and DAPK1 and suppressing their pro-apoptotic function. Promotes the survival of hepatic stellate cells by phosphorylating CEBPB in response to the hepatotoxin carbon tetrachloride (CCl4). Mediates induction of hepatocyte prolifration by TGFA through phosphorylation of CEBPB. Is involved in cell cycle regulation by phosphorylating the CDK inhibitor CDKN1B, which promotes CDKN1B association with 14-3-3 proteins and prevents its translocation to the nucleus and inhibition of G1 progression. Phosphorylates EPHA2 at 'Ser-897', the RPS6KA-EPHA2 signaling pathway controls cell migration. In response to mTORC1 activation, phosphorylates EIF4B at 'Ser-406' and 'Ser-422' which stimulates bicarbonate cotransporter SLC4A7 mRNA translation, increasing SLC4A7 protein abundance and function. The protein is Ribosomal protein S6 kinase alpha-1 (Rps6ka1) of Mus musculus (Mouse).